The chain runs to 28 residues: Kappa-buthitoxin-Tt2b (28 aa).

Intrachain disulfides connect C2/C24, C7/C20, and C11/C26.

As to expression, expressed by the venom gland.

It localises to the secreted. Its function is as follows. Blocks potassium channels Shaker-IR (with inactivation domain removed) and hKv1.2/KCNA2. The sequence is that of Kappa-buthitoxin-Tt2b from Tityus trivittatus (Argentinean scorpion).